The chain runs to 910 residues: Valine--tRNA ligase (910 aa).

The short motif at 45-55 (PNVTGSLHMGH) is the 'HIGH' region element. The 'KMSKS' region motif lies at 554–558 (KMSKS). Lys-557 lines the ATP pocket. Residues 842–910 (DLQAEAARLA…TAESRIRDAS (69 aa)) adopt a coiled-coil conformation.

This sequence belongs to the class-I aminoacyl-tRNA synthetase family. ValS type 1 subfamily. Monomer.

The protein localises to the cytoplasm. It catalyses the reaction tRNA(Val) + L-valine + ATP = L-valyl-tRNA(Val) + AMP + diphosphate. Catalyzes the attachment of valine to tRNA(Val). As ValRS can inadvertently accommodate and process structurally similar amino acids such as threonine, to avoid such errors, it has a 'posttransfer' editing activity that hydrolyzes mischarged Thr-tRNA(Val) in a tRNA-dependent manner. The protein is Valine--tRNA ligase of Brucella melitensis biotype 1 (strain ATCC 23456 / CCUG 17765 / NCTC 10094 / 16M).